Consider the following 566-residue polypeptide: Glucose-6-phosphate isomerase (566 aa).

Residue E374 is the Proton donor of the active site. Catalysis depends on residues H405 and K529.

Belongs to the GPI family.

It is found in the cytoplasm. The enzyme catalyses alpha-D-glucose 6-phosphate = beta-D-fructose 6-phosphate. Its pathway is carbohydrate biosynthesis; gluconeogenesis. The protein operates within carbohydrate degradation; glycolysis; D-glyceraldehyde 3-phosphate and glycerone phosphate from D-glucose: step 2/4. Its function is as follows. Catalyzes the reversible isomerization of glucose-6-phosphate to fructose-6-phosphate. This Bifidobacterium longum (strain NCC 2705) protein is Glucose-6-phosphate isomerase.